Here is a 179-residue protein sequence, read N- to C-terminus: Large ribosomal subunit protein uL5 (179 aa).

This sequence belongs to the universal ribosomal protein uL5 family. In terms of assembly, part of the 50S ribosomal subunit; part of the 5S rRNA/L5/L18/L25 subcomplex. Contacts the 5S rRNA and the P site tRNA. Forms a bridge to the 30S subunit in the 70S ribosome.

In terms of biological role, this is one of the proteins that bind and probably mediate the attachment of the 5S RNA into the large ribosomal subunit, where it forms part of the central protuberance. In the 70S ribosome it contacts protein S13 of the 30S subunit (bridge B1b), connecting the 2 subunits; this bridge is implicated in subunit movement. Contacts the P site tRNA; the 5S rRNA and some of its associated proteins might help stabilize positioning of ribosome-bound tRNAs. This is Large ribosomal subunit protein uL5 from Staphylococcus haemolyticus (strain JCSC1435).